A 202-amino-acid chain; its full sequence is 7-cyano-7-deazaguanine synthase 1 (202 aa).

An ATP-binding site is contributed by 7–17; it reads MSGGLDSSSAA. The Zn(2+) site is built by Cys166, Cys174, Cys177, and Cys180.

The protein belongs to the QueC family. Requires Zn(2+) as cofactor.

It catalyses the reaction 7-carboxy-7-deazaguanine + NH4(+) + ATP = 7-cyano-7-deazaguanine + ADP + phosphate + H2O + H(+). It participates in purine metabolism; 7-cyano-7-deazaguanine biosynthesis. Catalyzes the ATP-dependent conversion of 7-carboxy-7-deazaguanine (CDG) to 7-cyano-7-deazaguanine (preQ(0)). This chain is 7-cyano-7-deazaguanine synthase 1 (queC1), found in Sulfurisphaera tokodaii (strain DSM 16993 / JCM 10545 / NBRC 100140 / 7) (Sulfolobus tokodaii).